Reading from the N-terminus, the 458-residue chain is MALWGGRFTQAADQRFKQFNDSLRFDYRLAEQDIVGSVAWSKALVTVGVLTADEQRQLEEALNVLLEEVRANPQQILQSDAEDIHSWVEGKLIDKVGQLGKKLHTGRSRNDQVATDLKLWCKETVMELLTANRQLQSALVETAQANQDAVMPGYTHLQRAQPVTFAHWCLAYVEMLARDESRLQDTLKRLDVSPLGCGALAGTAYEIDREQLAGWLGFTSATRNSLDSVSDRDHVLELLSDAAIGMVHLSRFAEDLIFFNSGEAGFVELSDRVTSGSSLMPQKKNPDALELIRGKCGRVQGALTGMMMTLKGLPLAYNKDMQEDKEGLFDALDIWLDCLHMAALVLDGIQVKRPRCQDAAQQGYANATELADYLVAKGVPFREAHHIVGEAVVEAIRQGKPLEALPLADLQKFSRVIGDDVYPILSLQSCLDKRAAKGGVSPQQVAQAIDDAKVRLAL.

This sequence belongs to the lyase 1 family. Argininosuccinate lyase subfamily.

It is found in the cytoplasm. It catalyses the reaction 2-(N(omega)-L-arginino)succinate = fumarate + L-arginine. It participates in amino-acid biosynthesis; L-arginine biosynthesis; L-arginine from L-ornithine and carbamoyl phosphate: step 3/3. In Salmonella typhi, this protein is Argininosuccinate lyase.